We begin with the raw amino-acid sequence, 210 residues long: MRCLTTPMLLRALAQAARAGPPCGRSLHSSAVAATYKYVNMQEPEMDMKSVTDRAARTLLLTELFRGLGMTLSYLFREPATINYPFEKGPLSPRFRGEHALRRYPSGEERCIACKLCEAICPAQAITIEAEPRADGSRRTTRYDIDMTKCIYCGFCQEACPVDAIVEGPNFEFSTETHEELLYNKEKLLNNGDKWEAEIAANIQADYLYR.

A mitochondrion-targeting transit peptide spans 1–34; it reads MRCLTTPMLLRALAQAARAGPPCGRSLHSSAVAA. 4Fe-4S ferredoxin-type domains follow at residues 102–131 and 141–170; these read RRYP…IEAE and TRYD…EGPN. Residues Cys-111, Cys-114, Cys-117, Cys-121, Cys-150, Cys-153, Cys-156, and Cys-160 each contribute to the [4Fe-4S] cluster site.

The protein belongs to the complex I 23 kDa subunit family. Core subunit of respiratory chain NADH dehydrogenase (Complex I) which is composed of 45 different subunits. This is a component of the iron-sulfur (IP) fragment of the enzyme. Interacts with RAB5IF. Requires [4Fe-4S] cluster as cofactor.

The protein localises to the mitochondrion inner membrane. The catalysed reaction is a ubiquinone + NADH + 5 H(+)(in) = a ubiquinol + NAD(+) + 4 H(+)(out). Core subunit of the mitochondrial membrane respiratory chain NADH dehydrogenase (Complex I) which catalyzes electron transfer from NADH through the respiratory chain, using ubiquinone as an electron acceptor. Essential for the catalytic activity and assembly of complex I. This chain is NADH dehydrogenase [ubiquinone] iron-sulfur protein 8, mitochondrial (NDUFS8), found in Pongo abelii (Sumatran orangutan).